Reading from the N-terminus, the 331-residue chain is Biotin synthase (331 aa).

The 220-residue stretch at 53-272 (NHVETASLLS…LATARVMMPR (220 aa)) folds into the Radical SAM core domain. [4Fe-4S] cluster is bound by residues Cys-68, Cys-72, and Cys-75. Residues Cys-112, Cys-143, Cys-203, and Arg-276 each contribute to the [2Fe-2S] cluster site.

Belongs to the radical SAM superfamily. Biotin synthase family. As to quaternary structure, homodimer. Requires [4Fe-4S] cluster as cofactor. It depends on [2Fe-2S] cluster as a cofactor.

The catalysed reaction is (4R,5S)-dethiobiotin + (sulfur carrier)-SH + 2 reduced [2Fe-2S]-[ferredoxin] + 2 S-adenosyl-L-methionine = (sulfur carrier)-H + biotin + 2 5'-deoxyadenosine + 2 L-methionine + 2 oxidized [2Fe-2S]-[ferredoxin]. The protein operates within cofactor biosynthesis; biotin biosynthesis; biotin from 7,8-diaminononanoate: step 2/2. Catalyzes the conversion of dethiobiotin (DTB) to biotin by the insertion of a sulfur atom into dethiobiotin via a radical-based mechanism. The sequence is that of Biotin synthase from Bradyrhizobium diazoefficiens (strain JCM 10833 / BCRC 13528 / IAM 13628 / NBRC 14792 / USDA 110).